A 332-amino-acid polypeptide reads, in one-letter code: 2,3-diketo-L-gulonate reductase (332 aa).

The active-site Proton donor is His-44. NAD(+) is bound by residues 168 to 174 (ITMVDMS), 224 to 225 (WK), and 304 to 306 (GHE).

The protein belongs to the LDH2/MDH2 oxidoreductase family. DlgD subfamily. Homodimer.

Its subcellular location is the cytoplasm. The catalysed reaction is 3-dehydro-L-gulonate + NAD(+) = 2,3-dioxo-L-gulonate + NADH + H(+). It carries out the reaction 3-dehydro-L-gulonate + NADP(+) = 2,3-dioxo-L-gulonate + NADPH + H(+). In terms of biological role, catalyzes the reduction of 2,3-diketo-L-gulonate in the presence of NADH, to form 3-keto-L-gulonate. The sequence is that of 2,3-diketo-L-gulonate reductase from Escherichia coli O139:H28 (strain E24377A / ETEC).